The following is a 424-amino-acid chain: UDP-N-acetylglucosamine 1-carboxyvinyltransferase (424 aa).

22 to 23 (KN) serves as a coordination point for phosphoenolpyruvate. Residue Arg93 coordinates UDP-N-acetyl-alpha-D-glucosamine. The Proton donor role is filled by Cys117. A 2-(S-cysteinyl)pyruvic acid O-phosphothioketal modification is found at Cys117. UDP-N-acetyl-alpha-D-glucosamine-binding positions include 162-165 (KVSV), Asp307, and Ile329.

This sequence belongs to the EPSP synthase family. MurA subfamily.

The protein resides in the cytoplasm. The catalysed reaction is phosphoenolpyruvate + UDP-N-acetyl-alpha-D-glucosamine = UDP-N-acetyl-3-O-(1-carboxyvinyl)-alpha-D-glucosamine + phosphate. It functions in the pathway cell wall biogenesis; peptidoglycan biosynthesis. Its function is as follows. Cell wall formation. Adds enolpyruvyl to UDP-N-acetylglucosamine. This Actinobacillus pleuropneumoniae serotype 7 (strain AP76) protein is UDP-N-acetylglucosamine 1-carboxyvinyltransferase.